Here is a 273-residue protein sequence, read N- to C-terminus: MALKSFNPITPSLRELVQVDRTSLWKGRPFKALTKGISKTGGRNNQGRITSWQRGGGHKRLYRVIDFKRNKLDISAIVERIEYDPNRTAFIALIKYEDGEHAYILAPQKLVVGDKIISSKDADIKIGNCLPLRYIPIGTTLHNVEMKVGKGGQIARSAGTSVDLVGKDSGYAQIKLKSGEFRLVPLDCMATIGTVSNPDQKNINLGKAGRNRWLGWRPHVRGVAMNPVDHPHGGGEGKTSGGRHPVTPWGFPTKGKKTRKNKRTSKFIIKKRK.

The disordered stretch occupies residues 228–273 (VDHPHGGGEGKTSGGRHPVTPWGFPTKGKKTRKNKRTSKFIIKKRK). Residues 254-273 (KGKKTRKNKRTSKFIIKKRK) are compositionally biased toward basic residues.

Belongs to the universal ribosomal protein uL2 family. Part of the 50S ribosomal subunit. Forms a bridge to the 30S subunit in the 70S ribosome.

Functionally, one of the primary rRNA binding proteins. Required for association of the 30S and 50S subunits to form the 70S ribosome, for tRNA binding and peptide bond formation. It has been suggested to have peptidyltransferase activity; this is somewhat controversial. Makes several contacts with the 16S rRNA in the 70S ribosome. This is Large ribosomal subunit protein uL2 from Rickettsia bellii (strain OSU 85-389).